The sequence spans 126 residues: UPF0235 protein C15orf40 homolog (126 aa).

Residues 1-33 (MPKKAGATSKGKNQTKEPETPPPPTGPVATDSK) are disordered. At serine 89 the chain carries Phosphoserine.

This sequence belongs to the UPF0235 family.

The polypeptide is UPF0235 protein C15orf40 homolog (Rattus norvegicus (Rat)).